The primary structure comprises 644 residues: 3D-(3,5/4)-trihydroxycyclohexane-1,2-dione hydrolase (644 aa).

Glu65 is a binding site for thiamine diphosphate. A thiamine pyrophosphate binding region spans residues 442-522 (SLPGDLQRMW…INVLLFDNSG (81 aa)). Mg(2+) is bound by residues Asp493 and Asn520.

It belongs to the TPP enzyme family. It depends on Mg(2+) as a cofactor. The cofactor is thiamine diphosphate.

It carries out the reaction 3D-3,5/4-trihydroxycyclohexane-1,2-dione + H2O = 5-deoxy-D-glucuronate + H(+). Its pathway is polyol metabolism; myo-inositol degradation into acetyl-CoA; acetyl-CoA from myo-inositol: step 3/7. Involved in the cleavage of the C1-C2 bond of 3D-(3,5/4)-trihydroxycyclohexane-1,2-dione (THcHDO) to yield 5-deoxy-glucuronate (5DG). In Bacillus thuringiensis (strain Al Hakam), this protein is 3D-(3,5/4)-trihydroxycyclohexane-1,2-dione hydrolase.